Reading from the N-terminus, the 86-residue chain is MPKSEIHPKWYPDAKVICNGEVVMTTGSTKPELHVDVWSGNHPFFTGTQKILDTEGRVDRFMKKYGMGSADSATSQETKEAKESDK.

The disordered stretch occupies residues Gly-66–Lys-86. A compositionally biased stretch (basic and acidic residues) spans Glu-77–Lys-86.

The protein belongs to the bacterial ribosomal protein bL31 family. Type A subfamily. As to quaternary structure, part of the 50S ribosomal subunit.

Its function is as follows. Binds the 23S rRNA. The polypeptide is Large ribosomal subunit protein bL31 (Prochlorococcus marinus (strain MIT 9515)).